The following is a 558-amino-acid chain: uncharacterized protein (558 aa).

6 consecutive transmembrane segments (helical) span residues 63 to 83 (LTGI…PSIY), 90 to 110 (VTFG…TYWI), 143 to 163 (VAAV…TLYG), 168 to 188 (VFVT…ATNC), 226 to 246 (SLGS…VLLV), and 258 to 278 (VLIL…ILAW). The HAMP domain maps to 279–330 (LTAAPVRVVRAALKRVEQGDLRGDLVVFDGTELGELQRGFNAMVNGLRERER). Residues 362-486 (AVVFVDIVGS…KPVNQAARLC (125 aa)) enclose the Guanylate cyclase domain. A disordered region spans residues 529–558 (TQLASPHRRPPGSIHLTAEHAEEIRTDRLG). Residues 545 to 558 (TAEHAEEIRTDRLG) are compositionally biased toward basic and acidic residues.

The protein belongs to the adenylyl cyclase class-3 family.

The protein resides in the cell membrane. This is an uncharacterized protein from Mycobacterium tuberculosis (strain CDC 1551 / Oshkosh).